The following is a 403-amino-acid chain: Dual-specificity RNA methyltransferase RlmN (403 aa).

Residue E126 is the Proton acceptor of the active site. One can recognise a Radical SAM core domain in the interval 132–375 (ETDRGTLCVS…VRTPRGRDIL (244 aa)). The cysteines at positions 139 and 378 are disulfide-linked. The [4Fe-4S] cluster site is built by C146, C150, and C153. S-adenosyl-L-methionine-binding positions include 204-205 (GE), S236, 258-260 (SLH), and N335. The S-methylcysteine intermediate role is filled by C378.

This sequence belongs to the radical SAM superfamily. RlmN family. [4Fe-4S] cluster serves as cofactor.

The protein resides in the cytoplasm. The catalysed reaction is adenosine(2503) in 23S rRNA + 2 reduced [2Fe-2S]-[ferredoxin] + 2 S-adenosyl-L-methionine = 2-methyladenosine(2503) in 23S rRNA + 5'-deoxyadenosine + L-methionine + 2 oxidized [2Fe-2S]-[ferredoxin] + S-adenosyl-L-homocysteine. It catalyses the reaction adenosine(37) in tRNA + 2 reduced [2Fe-2S]-[ferredoxin] + 2 S-adenosyl-L-methionine = 2-methyladenosine(37) in tRNA + 5'-deoxyadenosine + L-methionine + 2 oxidized [2Fe-2S]-[ferredoxin] + S-adenosyl-L-homocysteine. Specifically methylates position 2 of adenine 2503 in 23S rRNA and position 2 of adenine 37 in tRNAs. m2A2503 modification seems to play a crucial role in the proofreading step occurring at the peptidyl transferase center and thus would serve to optimize ribosomal fidelity. The sequence is that of Dual-specificity RNA methyltransferase RlmN from Bradyrhizobium sp. (strain BTAi1 / ATCC BAA-1182).